An 836-amino-acid chain; its full sequence is Serine/threonine-protein kinase ATG1 (836 aa).

The Protein kinase domain maps to 21–321 (YTVEKEIGKG…FNEFFNNEVV (301 aa)). Residues 27–35 (IGKGSFAIV) and lysine 50 each bind ATP. The active-site Proton acceptor is aspartate 168. 3 disordered regions span residues 387 to 425 (EHYRERQDLQGQQQQQQQHPDSPPRGSTQGYQSSAGQTR), 458 to 489 (NNGPTTNNQGAQIIKPLRYRTSSSSDGHGGRR), and 619 to 642 (CAIDDDDDLDSGNPSSNQTLTPGA). The segment covering 395-404 (LQGQQQQQQQ) has biased composition (low complexity). Composition is skewed to polar residues over residues 411 to 425 (RGSTQGYQSSAGQTR), 459 to 468 (NGPTTNNQGA), and 630 to 640 (GNPSSNQTLTP). Residues 571–836 (ITPFVESLSA…RLKALKSKMS (266 aa)) are interaction with ATG13.

It belongs to the protein kinase superfamily. Ser/Thr protein kinase family. APG1/unc-51/ULK1 subfamily. As to quaternary structure, homodimer. Dimerization requires the presence of ATG13. Forms a ternary complex with ATG13 and ATG17.

The protein resides in the cytoplasm. Its subcellular location is the preautophagosomal structure membrane. The enzyme catalyses L-seryl-[protein] + ATP = O-phospho-L-seryl-[protein] + ADP + H(+). It catalyses the reaction L-threonyl-[protein] + ATP = O-phospho-L-threonyl-[protein] + ADP + H(+). Functionally, serine/threonine protein kinase involved in the cytoplasm to vacuole transport (Cvt) and found to be essential in autophagy, where it is required for the formation of autophagosomes. Involved in the clearance of protein aggregates which cannot be efficiently cleared by the proteasome. Required for selective autophagic degradation of the nucleus (nucleophagy) as well as for mitophagy which contributes to regulate mitochondrial quantity and quality by eliminating the mitochondria to a basal level to fulfill cellular energy requirements and preventing excess ROS production. Also involved in endoplasmic reticulum-specific autophagic process, in selective removal of ER-associated degradation (ERAD) substrates. Plays a key role in ATG9 and ATG23 cycling through the pre-autophagosomal structure and is necessary to promote ATG18 binding to ATG9 through phosphorylation of ATG9. Catalyzes phosphorylation of ATG4, decreasing the interaction between ATG4 and ATG8 and impairing deconjugation of PE-conjugated forms of ATG8. The protein is Serine/threonine-protein kinase ATG1 of Kluyveromyces marxianus (strain DMKU3-1042 / BCC 29191 / NBRC 104275) (Yeast).